The following is a 362-amino-acid chain: Aminomethyltransferase (362 aa).

Belongs to the GcvT family. In terms of assembly, the glycine cleavage system is composed of four proteins: P, T, L and H.

It catalyses the reaction N(6)-[(R)-S(8)-aminomethyldihydrolipoyl]-L-lysyl-[protein] + (6S)-5,6,7,8-tetrahydrofolate = N(6)-[(R)-dihydrolipoyl]-L-lysyl-[protein] + (6R)-5,10-methylene-5,6,7,8-tetrahydrofolate + NH4(+). The glycine cleavage system catalyzes the degradation of glycine. This chain is Aminomethyltransferase, found in Listeria monocytogenes serotype 4b (strain CLIP80459).